We begin with the raw amino-acid sequence, 572 residues long: uncharacterized protein (572 aa).

A disordered region spans residues 543–572; the sequence is AYKKSSNTNSTTNSMNPRRSTVSSEDWVLN. Over residues 547 to 563 the composition is skewed to low complexity; that stretch reads SSNTNSTTNSMNPRRST.

This is an uncharacterized protein from Acanthamoeba polyphaga (Amoeba).